The primary structure comprises 570 residues: Hydroxylamine reductase (570 aa).

[4Fe-4S] cluster-binding residues include C5, C8, C17, and C23. Residues H266, E290, C334, C425, C453, C478, E513, and K515 each coordinate hybrid [4Fe-2O-2S] cluster. C425 bears the Cysteine persulfide mark.

The protein belongs to the HCP family. It depends on [4Fe-4S] cluster as a cofactor. The cofactor is hybrid [4Fe-2O-2S] cluster.

It is found in the cytoplasm. The enzyme catalyses A + NH4(+) + H2O = hydroxylamine + AH2 + H(+). Functionally, catalyzes the reduction of hydroxylamine to form NH(3) and H(2)O. This is Hydroxylamine reductase from Clostridium botulinum (strain ATCC 19397 / Type A).